A 355-amino-acid chain; its full sequence is Uroporphyrinogen decarboxylase (355 aa).

Substrate is bound by residues 27–31 (RQAGR), Asp-77, Tyr-154, Thr-209, and His-327.

It belongs to the uroporphyrinogen decarboxylase family. Homodimer.

The protein localises to the cytoplasm. The catalysed reaction is uroporphyrinogen III + 4 H(+) = coproporphyrinogen III + 4 CO2. It functions in the pathway porphyrin-containing compound metabolism; protoporphyrin-IX biosynthesis; coproporphyrinogen-III from 5-aminolevulinate: step 4/4. Its function is as follows. Catalyzes the decarboxylation of four acetate groups of uroporphyrinogen-III to yield coproporphyrinogen-III. The chain is Uroporphyrinogen decarboxylase from Tolumonas auensis (strain DSM 9187 / NBRC 110442 / TA 4).